The sequence spans 211 residues: 2,3-bisphosphoglycerate-dependent phosphoglycerate mutase (211 aa).

Residues 9-16, 22-23, Arg-61, 88-91, Lys-99, 115-116, and 159-160 each bind substrate; these read RHGQSDWN, TG, ERDY, RR, and GN. The Tele-phosphohistidine intermediate role is filled by His-10. The active-site Proton donor/acceptor is the Glu-88.

The protein belongs to the phosphoglycerate mutase family. BPG-dependent PGAM subfamily. As to quaternary structure, homodimer.

It catalyses the reaction (2R)-2-phosphoglycerate = (2R)-3-phosphoglycerate. It participates in carbohydrate degradation; glycolysis; pyruvate from D-glyceraldehyde 3-phosphate: step 3/5. In terms of biological role, catalyzes the interconversion of 2-phosphoglycerate and 3-phosphoglycerate. The sequence is that of 2,3-bisphosphoglycerate-dependent phosphoglycerate mutase from Rhizobium meliloti (strain 1021) (Ensifer meliloti).